The following is a 247-amino-acid chain: uncharacterized protein (247 aa).

The next 2 helical transmembrane spans lie at 9–29 and 37–57; these read IIAI…FLIF and SYFL…SLII.

Its subcellular location is the cell membrane. This is an uncharacterized protein from Methanocaldococcus jannaschii (strain ATCC 43067 / DSM 2661 / JAL-1 / JCM 10045 / NBRC 100440) (Methanococcus jannaschii).